Here is a 560-residue protein sequence, read N- to C-terminus: Cytosolic purine 5'-nucleotidase (560 aa).

D52 (nucleophile) is an active-site residue. Residues D52 and D54 each contribute to the IMP site. 2 residues coordinate Mg(2+): D52 and D54. D54 functions as the Proton donor in the catalytic mechanism. ATP contacts are provided by R144 and N154. The IMP site is built by R202, D206, K215, T249, N250, S251, and K292. D351 contributes to the Mg(2+) binding site. The residue at position 418 (S418) is a Phosphoserine. Positions 453 and 456 each coordinate ATP. S502, S511, and S527 each carry phosphoserine. Residues 541-560 (PQEITHCHDEDDDEEEEEEE) form a disordered region. Residues 548–560 (HDEDDDEEEEEEE) are required for tetramer assembly. A compositionally biased stretch (acidic residues) spans 550–560 (EDDDEEEEEEE).

This sequence belongs to the 5'(3')-deoxyribonucleotidase family. Homotetramer. It depends on Mg(2+) as a cofactor.

It localises to the cytoplasm. It is found in the cytosol. The catalysed reaction is a ribonucleoside 5'-phosphate + H2O = a ribonucleoside + phosphate. It catalyses the reaction a 2'-deoxyribonucleoside + a ribonucleoside 5'-phosphate = a ribonucleoside + a 2'-deoxyribonucleoside 5'-phosphate. The enzyme catalyses IMP + H2O = inosine + phosphate. It carries out the reaction GMP + H2O = guanosine + phosphate. The catalysed reaction is dIMP + H2O = 2'-deoxyinosine + phosphate. It catalyses the reaction dGMP + H2O = 2'-deoxyguanosine + phosphate. The enzyme catalyses XMP + H2O = xanthosine + phosphate. It carries out the reaction inosine + GMP = guanosine + IMP. The catalysed reaction is dGMP + inosine = 2'-deoxyguanosine + IMP. It catalyses the reaction dIMP + inosine = 2'-deoxyinosine + IMP. The enzyme catalyses inosine + UMP = uridine + IMP. It carries out the reaction inosine + CMP = cytidine + IMP. The catalysed reaction is inosine + AMP = IMP + adenosine. With respect to regulation, allosterically activated by various compounds including ATP, 2,3-BPG/2,3-Bisphosphoglyceric acid and Ap4A/P1,P4-bis(5'-adenosyl) tetraphosphate. Binding of an allosteric activator is a prerequisiste to magnesium and substrate binding. Inhibited by inorganic phosphate. Its function is as follows. Broad specificity cytosolic 5'-nucleotidase that catalyzes the dephosphorylation of 6-hydroxypurine nucleoside 5'-monophosphates. In addition, possesses a phosphotransferase activity by which it can transfer a phosphate from a donor nucleoside monophosphate to an acceptor nucleoside, preferably inosine, deoxyinosine and guanosine. Has the highest activities for IMP and GMP followed by dIMP, dGMP and XMP. Could also catalyze the transfer of phosphates from pyrimidine monophosphates but with lower efficiency. Through these activities regulates the purine nucleoside/nucleotide pools within the cell. The sequence is that of Cytosolic purine 5'-nucleotidase from Rattus norvegicus (Rat).